We begin with the raw amino-acid sequence, 278 residues long: Large ribosomal subunit protein uL2 (278 aa).

Positions 208 to 278 (AGRSRWMGKR…LIIRHRKGRK (71 aa)) are disordered. Over residues 209–219 (GRSRWMGKRPQ) the composition is skewed to basic residues. A compositionally biased stretch (basic and acidic residues) spans 258 to 270 (KTRDSKKASEKLI).

The protein belongs to the universal ribosomal protein uL2 family. In terms of assembly, part of the 50S ribosomal subunit. Forms a bridge to the 30S subunit in the 70S ribosome.

In terms of biological role, one of the primary rRNA binding proteins. Required for association of the 30S and 50S subunits to form the 70S ribosome, for tRNA binding and peptide bond formation. It has been suggested to have peptidyltransferase activity; this is somewhat controversial. Makes several contacts with the 16S rRNA in the 70S ribosome. This Lactobacillus delbrueckii subsp. bulgaricus (strain ATCC 11842 / DSM 20081 / BCRC 10696 / JCM 1002 / NBRC 13953 / NCIMB 11778 / NCTC 12712 / WDCM 00102 / Lb 14) protein is Large ribosomal subunit protein uL2.